The following is a 130-amino-acid chain: ATP synthase epsilon chain (130 aa).

It belongs to the ATPase epsilon chain family. In terms of assembly, F-type ATPases have 2 components, CF(1) - the catalytic core - and CF(0) - the membrane proton channel. CF(1) has five subunits: alpha(3), beta(3), gamma(1), delta(1), epsilon(1). CF(0) has three main subunits: a, b and c.

Its subcellular location is the cell membrane. In terms of biological role, produces ATP from ADP in the presence of a proton gradient across the membrane. This chain is ATP synthase epsilon chain, found in Nocardia farcinica (strain IFM 10152).